The sequence spans 572 residues: MRQSRTLIPTLREVPADAEAKSHQLLLRAGFIRQNTSGVYSYMPLANKVIHKIQSIVREEMEKINAVEMLMPALQQAETWQESGRWYTYGPELMRLKDRHGREFALGATHEEVITSIVRDEVKSYKRLPLTLYQIQSKFRDEKRPRFGLLRGREFIMKDAYSFHSSAESLDETYNDMYQAYTNVFTRCGLNFRPVIADSGAMGGKDTHEFMALSDVGEDTIAYSDQSSYAANIEMAEVKETDAGEQAEMKELQEVHTPSVKTIEEVAAFLGISPSDCIKSMLMKADGRFVLVLTRGDHEVNDVKVKNLLQAEIIEFASAEEVAEITGTEPGFVGPVGLDREIEIFADFAVKAMANAAAGANKTDYHYQNVNISRDAHNVTFADLRFIQEGDPSPDGKGTIRFAKGIEVGQVFKLGTRYSEAMDATYLDENGRAQPMLMGCYGIGISRTLSAIVEQHHDDKGLIWPLEVTPYDLHILALNMKNDAQVQLAEKLYEEFKANGYDVLFDDRAERAGVKFADSDLIGLPIRITVGKRADEGVVEVKIRKTGESFEIAADELFDFIEKQVKSLSSHS.

This sequence belongs to the class-II aminoacyl-tRNA synthetase family. ProS type 1 subfamily. As to quaternary structure, homodimer.

It is found in the cytoplasm. The enzyme catalyses tRNA(Pro) + L-proline + ATP = L-prolyl-tRNA(Pro) + AMP + diphosphate. Catalyzes the attachment of proline to tRNA(Pro) in a two-step reaction: proline is first activated by ATP to form Pro-AMP and then transferred to the acceptor end of tRNA(Pro). As ProRS can inadvertently accommodate and process non-cognate amino acids such as alanine and cysteine, to avoid such errors it has two additional distinct editing activities against alanine. One activity is designated as 'pretransfer' editing and involves the tRNA(Pro)-independent hydrolysis of activated Ala-AMP. The other activity is designated 'posttransfer' editing and involves deacylation of mischarged Ala-tRNA(Pro). The misacylated Cys-tRNA(Pro) is not edited by ProRS. In Bacillus licheniformis (strain ATCC 14580 / DSM 13 / JCM 2505 / CCUG 7422 / NBRC 12200 / NCIMB 9375 / NCTC 10341 / NRRL NRS-1264 / Gibson 46), this protein is Proline--tRNA ligase.